A 216-amino-acid chain; its full sequence is PRA1 family protein B6 (216 aa).

A2 carries the post-translational modification N-acetylalanine. The next 5 helical transmembrane spans lie at 83-103, 105-125, 135-155, 159-179, and 186-206; these read LVAILLAASLLTHPFALFLLA, LAASWLFLYFFRPADQPLVIG, LGILCLSTVVVMFMTSVGSLL, LAVGIMGVAIHGAFRAPEDLF, and IGSGLFAFFNNNASNAAAAAI.

This sequence belongs to the PRA1 family. Interacts with PRA1B1, PRA1B2, PRA1B3, PRA1B4, PRA1B5 and PRA1E. As to expression, expressed in hypocotyls, roots, lateral roots, lateral root caps, columella cells, leaves and stomata.

It localises to the endoplasmic reticulum membrane. In terms of biological role, may be involved in both secretory and endocytic intracellular trafficking in the endosomal/prevacuolar compartments. In Arabidopsis thaliana (Mouse-ear cress), this protein is PRA1 family protein B6 (PRA1B6).